The primary structure comprises 488 residues: Zinc metalloproteinase-disintegrin 8 (488 aa).

A signal peptide spans 1 to 20 (MIQVLLVTICLAVFPYQGSS). Positions 21–191 (IILESGNVND…KASQLNLPPE (171 aa)) are excised as a propeptide. Residues 198–396 (TYIELVVVAD…STTRCLHNEP (199 aa)) enclose the Peptidase M12B domain. Glu201 and Asp285 together coordinate Ca(2+). N-linked (GlcNAc...) asparagine glycosylation is present at Asn296. 3 cysteine pairs are disulfide-bonded: Cys309/Cys391, Cys349/Cys373, and Cys351/Cys356. Position 334 (His334) interacts with Zn(2+). Residue Glu335 is part of the active site. His338 and His344 together coordinate Zn(2+). Cys391, Asn394, Asn409, Glu413, Glu416, and Asp419 together coordinate Ca(2+). In terms of domain architecture, Disintegrin spans 404–488 (PPFCGNYFKE…ADCPRNGLYG (85 aa)). 7 disulfides stabilise this stretch: Cys407/Cys426, Cys418/Cys436, Cys420/Cys431, Cys430/Cys453, Cys444/Cys450, Cys449/Cys474, and Cys462/Cys481. Residues 466 to 468 (RGD) carry the Cell attachment site motif.

This sequence belongs to the venom metalloproteinase (M12B) family. P-II subfamily. It depends on Zn(2+) as a cofactor. Expressed by the venom gland.

It is found in the secreted. Functionally, inhibits ADP-induced platelet aggregation (probably by binding integrin alpha-IIb/beta-3 (ITGA2B/ITGB3)) and degrades fibrinogen. This Crotalus adamanteus (Eastern diamondback rattlesnake) protein is Zinc metalloproteinase-disintegrin 8.